Consider the following 630-residue polypeptide: tRNA uridine 5-carboxymethylaminomethyl modification enzyme MnmG (630 aa).

FAD is bound by residues glycine 13–glycine 18, valine 125, and serine 180. Glycine 273–phenylalanine 287 contributes to the NAD(+) binding site. Glutamine 370 provides a ligand contact to FAD.

Belongs to the MnmG family. Homodimer. Heterotetramer of two MnmE and two MnmG subunits. Requires FAD as cofactor.

Its subcellular location is the cytoplasm. Its function is as follows. NAD-binding protein involved in the addition of a carboxymethylaminomethyl (cmnm) group at the wobble position (U34) of certain tRNAs, forming tRNA-cmnm(5)s(2)U34. The polypeptide is tRNA uridine 5-carboxymethylaminomethyl modification enzyme MnmG (Shewanella woodyi (strain ATCC 51908 / MS32)).